Consider the following 105-residue polypeptide: Large ribosomal subunit protein uL24 (105 aa).

The protein belongs to the universal ribosomal protein uL24 family. In terms of assembly, part of the 50S ribosomal subunit.

One of two assembly initiator proteins, it binds directly to the 5'-end of the 23S rRNA, where it nucleates assembly of the 50S subunit. Functionally, one of the proteins that surrounds the polypeptide exit tunnel on the outside of the subunit. The protein is Large ribosomal subunit protein uL24 of Nitrosomonas europaea (strain ATCC 19718 / CIP 103999 / KCTC 2705 / NBRC 14298).